The sequence spans 446 residues: Methanol utilization control sensor protein MoxY (446 aa).

A run of 3 helical transmembrane segments spans residues 1-21 (MGLA…ILIV), 101-121 (WFSA…THYP), and 144-164 (FSII…LAFL). In terms of domain architecture, HAMP spans 167–219 (TLLTRRLQSVQAAMAQMQDGRLSVRAPDDRLTEFADLAAGVNALASHLQAEQA). Residues 390 to 409 (TDNGKGPQSGTGRPTPGFGQ) are disordered.

The protein localises to the cell inner membrane. In terms of biological role, member of the two-component regulatory system MoxY/MoxX probably involved in the regulation of the methanol dehydrogenase expression. May function as a membrane-associated protein kinase that phosphorylates MoxX in response to environmental signals. In Paracoccus denitrificans, this protein is Methanol utilization control sensor protein MoxY (moxY).